We begin with the raw amino-acid sequence, 386 residues long: 2-deoxy-scyllo-inosose synthase (386 aa).

Residues D42, E73–K76, G105–N109, T129–T130, S140–K142, and K151–N152 contribute to the NAD(+) site. K142 is an active-site residue. E184 contacts Co(2+). Residue E244 is part of the active site. H247 and H263 together coordinate Co(2+).

The protein belongs to the sugar phosphate cyclases superfamily. DOI synthase family. NAD(+) is required as a cofactor. It depends on Co(2+) as a cofactor.

The catalysed reaction is D-glucose 6-phosphate = 2-deoxy-L-scyllo-inosose + phosphate. Its pathway is metabolic intermediate biosynthesis; 2-deoxystreptamine biosynthesis; 2-deoxystreptamine from D-glucose 6-phosphate: step 1/4. It functions in the pathway antibiotic biosynthesis; tobramycin biosynthesis. In terms of biological role, catalyzes the intramolecular carbocycle formation from D-glucose-6-phosphate to 2-deoxy-scyllo-inosose (DOI). In Streptoalloteichus tenebrarius (strain ATCC 17920 / DSM 40477 / JCM 4838 / CBS 697.72 / NBRC 16177 / NCIMB 11028 / NRRL B-12390 / A12253. 1 / ISP 5477) (Streptomyces tenebrarius), this protein is 2-deoxy-scyllo-inosose synthase (tbmA).